The chain runs to 97 residues: Aspartyl/glutamyl-tRNA(Asn/Gln) amidotransferase subunit C (97 aa).

This sequence belongs to the GatC family. As to quaternary structure, heterotrimer of A, B and C subunits.

It catalyses the reaction L-glutamyl-tRNA(Gln) + L-glutamine + ATP + H2O = L-glutaminyl-tRNA(Gln) + L-glutamate + ADP + phosphate + H(+). The enzyme catalyses L-aspartyl-tRNA(Asn) + L-glutamine + ATP + H2O = L-asparaginyl-tRNA(Asn) + L-glutamate + ADP + phosphate + 2 H(+). Its function is as follows. Allows the formation of correctly charged Asn-tRNA(Asn) or Gln-tRNA(Gln) through the transamidation of misacylated Asp-tRNA(Asn) or Glu-tRNA(Gln) in organisms which lack either or both of asparaginyl-tRNA or glutaminyl-tRNA synthetases. The reaction takes place in the presence of glutamine and ATP through an activated phospho-Asp-tRNA(Asn) or phospho-Glu-tRNA(Gln). In Prochlorococcus marinus (strain MIT 9313), this protein is Aspartyl/glutamyl-tRNA(Asn/Gln) amidotransferase subunit C.